A 442-amino-acid polypeptide reads, in one-letter code: Ankyrin repeat and MYND domain-containing protein 2 (442 aa).

ANK repeat units lie at residues 45–74 (NGMTPLMHAAYKGKLDMCKLLLRHGADVNC), 79–108 (HGYTALMFAALSGNKDITWVMLEAGAETDV), and 159–188 (KLAGPLHKIITTTNLHPVKIVMLINENPLL). Zn(2+)-binding residues include C320, C323, C332, C335, C341, C345, H353, and C357. The MYND-type zinc-finger motif lies at 320–357 (CTTCGEKGASKRCSVCKMVIYCDQTCQKTHWFAHKKIC). Positions 401 to 421 (TRICQKNDNPKDSEEGEKESL) are enriched in basic and acidic residues. The tract at residues 401-442 (TRICQKNDNPKDSEEGEKESLQSDAGLEGLQEAAVGPQVSEE) is disordered.

In terms of assembly, interacts with the retinal-specific guanylyl cyclase GC1.

The protein localises to the cell projection. The protein resides in the cilium. Its function is as follows. May be involved in the trafficking of signaling proteins to the cilia. The chain is Ankyrin repeat and MYND domain-containing protein 2 (ANKMY2) from Bos taurus (Bovine).